Reading from the N-terminus, the 1058-residue chain is Carbamoyl phosphate synthase large chain (1058 aa).

The tract at residues 1-401 is carboxyphosphate synthetic domain; it reads MPKRKDIQKI…SLLKACRSLE (401 aa). Residues arginine 129, arginine 169, glycine 175, glycine 176, arginine 208, isoleucine 210, glutamate 215, glycine 241, isoleucine 242, histidine 243, glutamine 284, and glutamate 298 each contribute to the ATP site. The ATP-grasp 1 domain occupies 133–327; it reads KQLMQELDQP…IAKLAAKIAV (195 aa). Mg(2+)-binding residues include glutamine 284, glutamate 298, and asparagine 300. Mn(2+) contacts are provided by glutamine 284, glutamate 298, and asparagine 300. The tract at residues 402–546 is oligomerization domain; that stretch reads IGVCHNEMTS…YSTYELENES (145 aa). Residues 547–929 are carbamoyl phosphate synthetic domain; it reads VQSNKESILV…ALYKAFEANN (383 aa). One can recognise an ATP-grasp 2 domain in the interval 671-861; it reads EKALKELGIP…MAQIATKLIL (191 aa). ATP contacts are provided by arginine 707, serine 746, isoleucine 748, glutamate 752, glycine 777, valine 778, histidine 779, serine 780, glutamine 820, and glutamate 832. 3 residues coordinate Mg(2+): glutamine 820, glutamate 832, and asparagine 834. The Mn(2+) site is built by glutamine 820, glutamate 832, and asparagine 834. The 129-residue stretch at 930-1058 folds into the MGS-like domain; sequence SHLSEFGQIV…ESRCFNIEAI (129 aa). The tract at residues 930 to 1058 is allosteric domain; it reads SHLSEFGQIV…ESRCFNIEAI (129 aa).

The protein belongs to the CarB family. Composed of two chains; the small (or glutamine) chain promotes the hydrolysis of glutamine to ammonia, which is used by the large (or ammonia) chain to synthesize carbamoyl phosphate. Tetramer of heterodimers (alpha,beta)4. Mg(2+) is required as a cofactor. It depends on Mn(2+) as a cofactor.

The catalysed reaction is hydrogencarbonate + L-glutamine + 2 ATP + H2O = carbamoyl phosphate + L-glutamate + 2 ADP + phosphate + 2 H(+). It catalyses the reaction hydrogencarbonate + NH4(+) + 2 ATP = carbamoyl phosphate + 2 ADP + phosphate + 2 H(+). Its pathway is amino-acid biosynthesis; L-arginine biosynthesis; carbamoyl phosphate from bicarbonate: step 1/1. It participates in pyrimidine metabolism; UMP biosynthesis via de novo pathway; (S)-dihydroorotate from bicarbonate: step 1/3. In terms of biological role, large subunit of the glutamine-dependent carbamoyl phosphate synthetase (CPSase). CPSase catalyzes the formation of carbamoyl phosphate from the ammonia moiety of glutamine, carbonate, and phosphate donated by ATP, constituting the first step of 2 biosynthetic pathways, one leading to arginine and/or urea and the other to pyrimidine nucleotides. The large subunit (synthetase) binds the substrates ammonia (free or transferred from glutamine from the small subunit), hydrogencarbonate and ATP and carries out an ATP-coupled ligase reaction, activating hydrogencarbonate by forming carboxy phosphate which reacts with ammonia to form carbamoyl phosphate. In Streptococcus pyogenes serotype M1, this protein is Carbamoyl phosphate synthase large chain.